The sequence spans 734 residues: Photosystem I P700 chlorophyll a apoprotein A2 (734 aa).

8 helical membrane passes run 46–69 (IFAS…FHVA), 135–158 (LYTG…LHLQ), 175–199 (LNHH…HVAI), 273–291 (IAHH…GHMY), 330–353 (LHFQ…QHMY), 369–395 (AALY…IFFI), 417–439 (AIIS…LYVH), and 517–535 (FLVH…LILV). Residues Cys559 and Cys568 each contribute to the [4Fe-4S] cluster site. 2 helical membrane passes run 575-596 (AFYL…YWHW) and 643-665 (LSVW…MFLI). 3 residues coordinate chlorophyll a: His654, Met662, and Tyr670. Trp671 contributes to the phylloquinone binding site. The helical transmembrane segment at 707–727 (LVGLAHFSVGYIFTYAAFLIA) threads the bilayer.

It belongs to the PsaA/PsaB family. In terms of assembly, the PsaA/B heterodimer binds the P700 chlorophyll special pair and subsequent electron acceptors. PSI consists of a core antenna complex that captures photons, and an electron transfer chain that converts photonic excitation into a charge separation. The eukaryotic PSI reaction center is composed of at least 11 subunits. P700 is a chlorophyll a/chlorophyll a' dimer, A0 is one or more chlorophyll a, A1 is one or both phylloquinones and FX is a shared 4Fe-4S iron-sulfur center. is required as a cofactor.

It is found in the plastid. The protein localises to the chloroplast thylakoid membrane. It catalyses the reaction reduced [plastocyanin] + hnu + oxidized [2Fe-2S]-[ferredoxin] = oxidized [plastocyanin] + reduced [2Fe-2S]-[ferredoxin]. PsaA and PsaB bind P700, the primary electron donor of photosystem I (PSI), as well as the electron acceptors A0, A1 and FX. PSI is a plastocyanin-ferredoxin oxidoreductase, converting photonic excitation into a charge separation, which transfers an electron from the donor P700 chlorophyll pair to the spectroscopically characterized acceptors A0, A1, FX, FA and FB in turn. Oxidized P700 is reduced on the lumenal side of the thylakoid membrane by plastocyanin. This Piper cenocladum (Ant piper) protein is Photosystem I P700 chlorophyll a apoprotein A2.